A 123-amino-acid chain; its full sequence is Fluoride-specific ion channel FluC (123 aa).

Helical transmembrane passes span 7 to 27 (MAIA…SGLL), 39 to 59 (MVNS…FWGF), 68 to 88 (FFGT…YETF), and 101 to 121 (LNIL…FMLA). 2 residues coordinate Na(+): G75 and S78.

It belongs to the fluoride channel Fluc/FEX (TC 1.A.43) family.

The protein localises to the cell membrane. It carries out the reaction fluoride(in) = fluoride(out). With respect to regulation, na(+) is not transported, but it plays an essential structural role and its presence is essential for fluoride channel function. Fluoride-specific ion channel. Important for reducing fluoride concentration in the cell, thus reducing its toxicity. In Thermococcus kodakarensis (strain ATCC BAA-918 / JCM 12380 / KOD1) (Pyrococcus kodakaraensis (strain KOD1)), this protein is Fluoride-specific ion channel FluC.